We begin with the raw amino-acid sequence, 292 residues long: 4-diphosphocytidyl-2-C-methyl-D-erythritol kinase (292 aa).

Lys13 is a catalytic residue. 97 to 107 contributes to the ATP binding site; it reads PVAAGLAGGSS. The active site involves Asp139.

Belongs to the GHMP kinase family. IspE subfamily.

The catalysed reaction is 4-CDP-2-C-methyl-D-erythritol + ATP = 4-CDP-2-C-methyl-D-erythritol 2-phosphate + ADP + H(+). Its pathway is isoprenoid biosynthesis; isopentenyl diphosphate biosynthesis via DXP pathway; isopentenyl diphosphate from 1-deoxy-D-xylulose 5-phosphate: step 3/6. In terms of biological role, catalyzes the phosphorylation of the position 2 hydroxy group of 4-diphosphocytidyl-2C-methyl-D-erythritol. This chain is 4-diphosphocytidyl-2-C-methyl-D-erythritol kinase, found in Bacillus thuringiensis (strain Al Hakam).